The sequence spans 316 residues: Ribosomal RNA small subunit methyltransferase H (316 aa).

Residues 35–37 (AGH), D55, F84, D105, and Q112 each bind S-adenosyl-L-methionine.

The protein belongs to the methyltransferase superfamily. RsmH family.

Its subcellular location is the cytoplasm. It carries out the reaction cytidine(1402) in 16S rRNA + S-adenosyl-L-methionine = N(4)-methylcytidine(1402) in 16S rRNA + S-adenosyl-L-homocysteine + H(+). Functionally, specifically methylates the N4 position of cytidine in position 1402 (C1402) of 16S rRNA. This chain is Ribosomal RNA small subunit methyltransferase H, found in Streptococcus thermophilus (strain CNRZ 1066).